A 500-amino-acid chain; its full sequence is NAD(P)H-quinone oxidoreductase chain 4, chloroplastic (500 aa).

14 consecutive transmembrane segments (helical) span residues 4–24, 35–55, 87–107, 113–130, 134–154, 167–187, 208–228, 242–262, 272–292, 305–325, 330–350, 386–406, 416–436, and 462–482; these read FPWLTIIVVFPIFAGSLIFFL, YTICICILELLLTTYAFCYHF, IGPILLTGFITTLATLAAWPV, LFHFLMLAMYSGQIGLFS, LLLFFIMWELELIPVYLLLAM, FILYTAGGSVFLLMGVLGVAL, VLEIIFYIGFFIAFAVKSPII, HYSTCMLLAGILLKMGAYGLI, AHSIFSPWLMIIGTIQIIYAA, IAYSSVSHMGFIIIGISSLTD, GALLQIISHGFIGAALFFLAG, LALPGMSGFVAELIVFFGIIT, LLITFVMAIGIILTPIYSLSM, and LFLSISIFLPVIGIGIYPDFV.

The protein belongs to the complex I subunit 4 family.

The protein resides in the plastid. It is found in the chloroplast thylakoid membrane. The catalysed reaction is a plastoquinone + NADH + (n+1) H(+)(in) = a plastoquinol + NAD(+) + n H(+)(out). It carries out the reaction a plastoquinone + NADPH + (n+1) H(+)(in) = a plastoquinol + NADP(+) + n H(+)(out). The sequence is that of NAD(P)H-quinone oxidoreductase chain 4, chloroplastic from Solanum lycopersicum (Tomato).